Reading from the N-terminus, the 333-residue chain is Cytochrome f (333 aa).

Residues methionine 1–alanine 37 form the signal peptide. Residues leucine 38 to arginine 298 are Cytoplasmic-facing. The heme site is built by tyrosine 45, cysteine 66, cysteine 69, and histidine 70. Residues valine 299–lysine 319 form a helical membrane-spanning segment. The Lumenal, thylakoid portion of the chain corresponds to lysine 320 to phenylalanine 333.

The protein belongs to the cytochrome f family. As to quaternary structure, the 4 large subunits of the cytochrome b6-f complex are cytochrome b6, subunit IV (17 kDa polypeptide, PetD), cytochrome f and the Rieske protein, while the 4 small subunits are PetG, PetL, PetM and PetN. The complex functions as a dimer. Heme serves as cofactor.

The protein localises to the cellular thylakoid membrane. Component of the cytochrome b6-f complex, which mediates electron transfer between photosystem II (PSII) and photosystem I (PSI), cyclic electron flow around PSI, and state transitions. The chain is Cytochrome f (petA) from Mastigocladus laminosus (Fischerella sp.).